The chain runs to 796 residues: Protein translocase subunit SecA 2 (796 aa).

Residues Gln-84, 102–106 (GEGKT), and Asp-496 each bind ATP.

This sequence belongs to the SecA family. Monomer and homodimer. Part of the essential Sec protein translocation apparatus which comprises SecA, SecYEG and auxiliary proteins SecDF. Other proteins may also be involved.

The protein localises to the cell membrane. Its subcellular location is the cytoplasm. The enzyme catalyses ATP + H2O + cellular proteinSide 1 = ADP + phosphate + cellular proteinSide 2.. Its function is as follows. Part of the Sec protein translocase complex. Interacts with the SecYEG preprotein conducting channel. Has a central role in coupling the hydrolysis of ATP to the transfer of proteins into and across the cell membrane, serving as an ATP-driven molecular motor driving the stepwise translocation of polypeptide chains across the membrane. The protein is Protein translocase subunit SecA 2 of Staphylococcus aureus (strain MRSA252).